Reading from the N-terminus, the 122-residue chain is Large ribosomal subunit protein uL24 (122 aa).

The protein belongs to the universal ribosomal protein uL24 family. In terms of assembly, part of the 50S ribosomal subunit.

In terms of biological role, one of two assembly initiator proteins, it binds directly to the 5'-end of the 23S rRNA, where it nucleates assembly of the 50S subunit. Located at the polypeptide exit tunnel on the outside of the subunit. The sequence is that of Large ribosomal subunit protein uL24 from Methanosarcina mazei (strain ATCC BAA-159 / DSM 3647 / Goe1 / Go1 / JCM 11833 / OCM 88) (Methanosarcina frisia).